A 456-amino-acid polypeptide reads, in one-letter code: F-box/FBD/LRR-repeat protein At1g13780 (456 aa).

Residues 9–55 (FDRISELPESLISQILLHLPTKASVKTSVLSTRWKNLWLNVPGLDLN) enclose the F-box domain. LRR repeat units lie at residues 197 to 220 (LEEL…SLKR), 243 to 266 (APGL…NLTS), 302 to 325 (ISSV…SKVG), and 355 to 379 (FPNL…ELVN). The FBD domain maps to 372–424 (MEKFELVNVPRCFVSTLEHVEIKGLFDWGEQDMKIASYFLENSAVLKKLILSF).

This is F-box/FBD/LRR-repeat protein At1g13780 from Arabidopsis thaliana (Mouse-ear cress).